A 236-amino-acid polypeptide reads, in one-letter code: MNIRFSMLVCVSFIFFTGGCAESSANSNDGSKNKNESKEESSEEGVKENDNKLADTPNMDDCIEVYGKEECEQITEYYKSEEGQKELDASETDKYSAKSQTSTTHKDIYEKVSWLVKEMFGVPERTIPADYEKSLVEKRDDGLYYIQSSYEIKGTGNQADTYYEFEMLMDNKYNLIDAYFPGSTGRYSRPMVYDKLKNMEIPEVKKVSPEEEKREEKKREETMKSIYGEEHIKDNK.

The first 19 residues, 1-19 (MNIRFSMLVCVSFIFFTGG), serve as a signal peptide directing secretion. Cysteine 20 carries the N-palmitoyl cysteine lipid modification. Cysteine 20 carries S-diacylglycerol cysteine lipidation. 2 disordered regions span residues 23 to 59 (SSANSNDGSKNKNESKEESSEEGVKENDNKLADTPNM) and 204 to 236 (VKKVSPEEEKREEKKREETMKSIYGEEHIKDNK). Residues 31–53 (SKNKNESKEESSEEGVKENDNKL) are compositionally biased toward basic and acidic residues.

Its subcellular location is the cell membrane. This chain is SPbeta prophage-derived uncharacterized lipoprotein YokB (yokB), found in Bacillus subtilis (strain 168).